The sequence spans 286 residues: Pyridoxal kinase PdxY (286 aa).

Substrate is bound by residues Ser9 and 44–45 (MQ). ATP-binding residues include Asp111, Glu147, and Lys180. Asp221 provides a ligand contact to substrate.

It belongs to the pyridoxine kinase family. PdxY subfamily. In terms of assembly, homodimer. It depends on Mg(2+) as a cofactor.

The enzyme catalyses pyridoxal + ATP = pyridoxal 5'-phosphate + ADP + H(+). The protein operates within cofactor metabolism; pyridoxal 5'-phosphate salvage; pyridoxal 5'-phosphate from pyridoxal: step 1/1. Functionally, pyridoxal kinase involved in the salvage pathway of pyridoxal 5'-phosphate (PLP). Catalyzes the phosphorylation of pyridoxal to PLP. This Burkholderia lata (strain ATCC 17760 / DSM 23089 / LMG 22485 / NCIMB 9086 / R18194 / 383) protein is Pyridoxal kinase PdxY.